Reading from the N-terminus, the 325-residue chain is MKIFDYEDIQLIPNKCIVESRSECDTTIQFGPKKFKLPVVPANMQTVMNEKLAKWFAENDYFYIMHRFDEEARIPFIKHMQNSGLFASISVGVKKAEFDFIEKLAQEKLIPEYITIDIAHGHSDSVINMIKHIKTHIPDSFVIAGNVGTPEGVRELENAGADATKVGIGPGRVCITKIKTGFGTGGWQLAALNICSKAARKPLIADGGIRTHGDIAKSIRFGASMVMIGSLFAAHEESPGETVELDGKQYKEYFGSASEFQKGEHKNVEGKKMFVEHKGSLMDTLKEMQQDLQSSISYAGGKDLKSLRTVDYVIVRNSIFNGDRD.

Catalysis depends on Cys174, which acts as the Thioimidate intermediate. 203–226 (LIADGGIRTHGDIAKSIRFGASMV) lines the NADP(+) pocket.

It belongs to the IMPDH/GMPR family. GuaC type 2 subfamily.

It catalyses the reaction IMP + NH4(+) + NADP(+) = GMP + NADPH + 2 H(+). Catalyzes the irreversible NADPH-dependent deamination of GMP to IMP. It functions in the conversion of nucleobase, nucleoside and nucleotide derivatives of G to A nucleotides, and in maintaining the intracellular balance of A and G nucleotides. The chain is GMP reductase from Staphylococcus aureus (strain NCTC 8325 / PS 47).